Reading from the N-terminus, the 519-residue chain is Ion-translocating oxidoreductase complex subunit C (519 aa).

4Fe-4S ferredoxin-type domains are found at residues 372-401 and 411-440; these read ETPE…FELN and GAAK…VQSF. [4Fe-4S] cluster is bound by residues C381, C384, C387, C391, C420, C423, C426, and C430. A disordered region spans residues 494–519; it reads KAEEAAAAAAMPPPATATAIQGEATP.

It belongs to the 4Fe4S bacterial-type ferredoxin family. RnfC subfamily. The complex is composed of six subunits: RnfA, RnfB, RnfC, RnfD, RnfE and RnfG. [4Fe-4S] cluster is required as a cofactor.

The protein localises to the cellular chromatophore membrane. In terms of biological role, part of a membrane-bound complex that couples electron transfer with translocation of ions across the membrane. Required for nitrogen fixation. Involved in electron transfer to nitrogenase. The sequence is that of Ion-translocating oxidoreductase complex subunit C from Rhodobacter capsulatus (Rhodopseudomonas capsulata).